The sequence spans 2530 residues: Cullin-9 (2530 aa).

Lys87 participates in a covalent cross-link: Glycyl lysine isopeptide (Lys-Gly) (interchain with G-Cter in ubiquitin). The CPH domain occupies Arg367–Pro440. Disordered regions lie at residues Leu585–Ser639 and Arg930–Glu951. Residues Thr940–Ser949 show a composition bias toward polar residues. At Ser978 the chain carries Phosphoserine. A DOC domain is found at Pro1145–Ala1324. Ala1365–Thr1372 provides a ligand contact to ATP. 2 disordered regions span residues Glu1435–Cys1468 and Gly1667–Leu1690. Ser1459 carries the phosphoserine modification. Lys1884 participates in a covalent cross-link: Glycyl lysine isopeptide (Lys-Gly) (interchain with G-Cter in NEDD8). The interval Arg2070–Val2287 is TRIAD supradomain. Positions 2074, 2077, 2092, 2094, 2097, 2100, 2119, 2124, 2164, 2170, 2185, 2188, 2193, 2196, 2202, 2207, 2240, and 2243 each coordinate Zn(2+). The RING-type 1 zinc-finger motif lies at Cys2074–Cys2124. Residues Ser2144–Cys2207 form an IBR-type zinc finger. The segment at Cys2240–Cys2269 adopts an RING-type 2; atypical zinc-finger fold. Cys2253 is a catalytic residue. Residues Cys2258, Cys2261, Cys2266, Cys2269, His2277, and Cys2283 each contribute to the Zn(2+) site. Residue Ser2440 is modified to Phosphoserine. The interval Val2443 to Asp2530 is disordered. Positions Asn2452–Ser2462 are enriched in polar residues. Residues Gln2459–Asn2500 adopt a coiled-coil conformation. Acidic residues-rich tracts occupy residues Glu2465–Glu2510 and Gly2520–Asp2530.

It belongs to the cullin family. Component of a Cul9-RING complex consisting of CUL9 and RBX1; the CUL9-RBX1 complex is a heterododecamer composed of six CUL9 and six RBX1 protomers. Interacts (via C-terminal TRIAD/RBR supradomain) with E2 ubiquitin-conjugating enzyme UBE2L3. Interacts with CUL7; the interaction with the CUL7 component of the 3M complex leads to inhibition of CUL9 activity. The CUL7-CUL9 heterodimer seems to interact specifically with TP53, likely via the CPH domain. Forms a complex with p53/TP53 in the cytoplasm of unstressed cells. Interacts with UBCH7 and UBCH8. In terms of processing, autoubiquitinated by the CUL9-RBX1 complex at Lys-87. Neddylated. Neddylation is mediated by E1 enzyme UBA3-NAE1 complex and E2 enzyme UBE2F. Structural rearrangment of the C-terminal TRIAD/RBR supradomain may play a role in neddylation and deneddylation.

The protein resides in the cytoplasm. Core component of the Cul9-RING ubiquitin-protein ligase complex composed of CUL9 and RBX1. The CUL9-RBX1 complex mediates ubiquitination and subsequent degradation of BIRC5 and is required to maintain microtubule dynamics and genome integrity. Acts downstream of the 3M complex, which inhibits CUL9 activity and the ubiquitination of BIRC5. The CUL9-RBX1 complex also mediates mono-ubiquitination of p53/TP53. Acts as a cytoplasmic anchor protein in p53/TP53-associated protein complex. Regulates the subcellular localization of p53/TP53 and its subsequent function. Ubiquitinates apurinic/apyrimidinic endodeoxyribonuclease APEX2. Ubiquitination by the CUL9-RBX1 complex is predominantly mediated by E2 ubiquitin-conjugating enzymes UBE2L3 and UBE2D2. The polypeptide is Cullin-9 (Cul9) (Mus musculus (Mouse)).